The primary structure comprises 206 residues: CBS domain-containing protein CBSX3, mitochondrial (206 aa).

The N-terminal 39 residues, 1-39 (MQGVIRSFVSGGNVVKGSVLQHLRVINPAIQPSVFCSRS), are a transit peptide targeting the mitochondrion. CBS domains are found at residues 61–127 (MKSK…GRSS) and 136–194 (MTEE…HREE).

It localises to the mitochondrion. The polypeptide is CBS domain-containing protein CBSX3, mitochondrial (CBSX3) (Arabidopsis thaliana (Mouse-ear cress)).